The chain runs to 145 residues: D-aminoacyl-tRNA deacylase (145 aa).

The Gly-cisPro motif, important for rejection of L-amino acids motif lies at 137 to 138; that stretch reads GP.

Belongs to the DTD family. Homodimer.

It localises to the cytoplasm. The enzyme catalyses glycyl-tRNA(Ala) + H2O = tRNA(Ala) + glycine + H(+). The catalysed reaction is a D-aminoacyl-tRNA + H2O = a tRNA + a D-alpha-amino acid + H(+). Its function is as follows. An aminoacyl-tRNA editing enzyme that deacylates mischarged D-aminoacyl-tRNAs. Also deacylates mischarged glycyl-tRNA(Ala), protecting cells against glycine mischarging by AlaRS. Acts via tRNA-based rather than protein-based catalysis; rejects L-amino acids rather than detecting D-amino acids in the active site. By recycling D-aminoacyl-tRNA to D-amino acids and free tRNA molecules, this enzyme counteracts the toxicity associated with the formation of D-aminoacyl-tRNA entities in vivo and helps enforce protein L-homochirality. In Ruegeria pomeroyi (strain ATCC 700808 / DSM 15171 / DSS-3) (Silicibacter pomeroyi), this protein is D-aminoacyl-tRNA deacylase.